A 136-amino-acid polypeptide reads, in one-letter code: Large ribosomal subunit protein uL16c (136 aa).

This sequence belongs to the universal ribosomal protein uL16 family. In terms of assembly, part of the 50S ribosomal subunit.

The protein localises to the plastid. Its subcellular location is the chloroplast. This Chlamydomonas sp. (strain WXM) protein is Large ribosomal subunit protein uL16c.